Reading from the N-terminus, the 106-residue chain is Transcriptional and immune response regulator (106 aa).

As to quaternary structure, monomer. Interacts with NOTCH2 (via ANK repeats), the interaction inhibits the nuclear translocation of NOTCH2 N2ICD. Interacts (C-terminus) with CBY1 (C-terminus), TCIM competes with CTNNB1 for the interaction with CBY1. In terms of tissue distribution, expressed in liver, expression levels decrease in regenerating liver. In bone marrow, expressed in large progenitor-like cells, cells with ring-shaped nuclei and, at lower, levels in hematopietic stem cell-like cells with round nuclei (at protein level).

It localises to the cytoplasm. The protein resides in the nucleus. Its subcellular location is the nucleolus. It is found in the nucleus speckle. In terms of biological role, seems to be involved in the regulation of cell growth an differentiation, may play different and opposite roles depending on the tissue or cell type. May enhance the WNT-CTNNB1 pathway by relieving antagonistic activity of CBY1. Enhances the proliferation of follicular dendritic cells. Plays a role in the mitogen-activated MAPK2/3 signaling pathway, positively regulates G1-to-S-phase transition of the cell cycle. In endothelial cells, enhances key inflammatory mediators and inflammatory response through the modulation of NF-kappaB transcriptional regulatory activity. Involved in the regulation of heat shock response, seems to play a positive feedback with HSF1 to modulate heat-shock downstream gene expression. Plays a role in the regulation of hematopoiesis even if the mechanisms are unknown. In cancers such as thyroid or lung cancer, it has been described as promoter of cell proliferation, G1-to-S-phase transition and inhibitor of apoptosis. However, it negatively regulates self-renewal of liver cancer cells via suppresion of NOTCH2 signaling. This chain is Transcriptional and immune response regulator, found in Mus musculus (Mouse).